The following is a 579-amino-acid chain: Maintenance of mitochondrial morphology protein 1 (579 aa).

Topologically, residues 1-43 (MQQPQQQDLQIGLPYAPVQPPIPSPAAYFAYLPSPSRWTFTQG) are lumenal. A helical membrane pass occupies residues 44–64 (LIVGQVSMVIVALLLIRYVIF). The Cytoplasmic portion of the chain corresponds to 65–579 (EDSATALEKE…GLRNRPGFVQ (515 aa)). Residues 150–391 (LPESADWLNV…WPRYWSLTLP (242 aa)) enclose the SMP-LTD domain. Disordered regions lie at residues 309–332 (VLPTANPNPSSSSSSSATPPRSRH), 460–479 (RPSLASSRPPHVRSSSSGLR), and 558–579 (SSVLPTGAHHSSGLRNRPGFVQ). Composition is skewed to low complexity over residues 311-328 (PTANPNPSSSSSSSATPP) and 465-476 (SSRPPHVRSSSS).

Belongs to the MMM1 family. In terms of assembly, homodimer. Component of the ER-mitochondria encounter structure (ERMES) or MDM complex, composed of MMM1, MDM10, MDM12 and MDM34. An MMM1 homodimer associates with one molecule of MDM12 on each side in a pairwise head-to-tail manner, and the SMP-LTD domains of MMM1 and MDM12 generate a continuous hydrophobic tunnel for phospholipid trafficking.

The protein resides in the endoplasmic reticulum membrane. Functionally, component of the ERMES/MDM complex, which serves as a molecular tether to connect the endoplasmic reticulum (ER) and mitochondria. Components of this complex are involved in the control of mitochondrial shape and protein biogenesis, and function in nonvesicular lipid trafficking between the ER and mitochondria. The MDM12-MMM1 subcomplex functions in the major beta-barrel assembly pathway that is responsible for biogenesis of all outer membrane beta-barrel proteins, and acts in a late step after the SAM complex. The MDM10-MDM12-MMM1 subcomplex further acts in the TOM40-specific pathway after the action of the MDM12-MMM1 complex. Essential for establishing and maintaining the structure of mitochondria and maintenance of mtDNA nucleoids. The protein is Maintenance of mitochondrial morphology protein 1 of Mycosarcoma maydis (Corn smut fungus).